The primary structure comprises 42 residues: Envelope protein P10 (42 aa).

The chain crosses the membrane as a helical span at residues T20 to L40.

It localises to the virion membrane. Its function is as follows. Involved in cell lysis. The polypeptide is Envelope protein P10 (P10) (Pseudomonas savastanoi pv. phaseolicola (Pseudomonas syringae pv. phaseolicola)).